The chain runs to 299 residues: Taste receptor type 2 member 4 (299 aa).

Over methionine 1–alanine 9 the chain is Extracellular. A helical transmembrane segment spans residues isoleucine 10 to valine 30. Topologically, residues asparagine 31–arginine 46 are cytoplasmic. The chain crosses the membrane as a helical span at residues isoleucine 47 to isoleucine 67. The Extracellular portion of the chain corresponds to tyrosine 68–serine 81. The chain crosses the membrane as a helical span at residues alanine 82–leucine 102. At asparagine 103–arginine 131 the chain is on the cytoplasmic side. Residues leucine 132–glutamine 152 traverse the membrane as a helical segment. Over alanine 153–glutamate 172 the chain is Extracellular. Asparagine 164, asparagine 165, and asparagine 169 each carry an N-linked (GlcNAc...) asparagine glycan. The chain crosses the membrane as a helical span at residues glycine 173–valine 193. At threonine 194–lysine 230 the chain is on the cytoplasmic side. The chain crosses the membrane as a helical span at residues leucine 231 to leucine 251. Over proline 252–lysine 262 the chain is Extracellular. A helical membrane pass occupies residues serine 263–threonine 283. Topologically, residues histidine 284–lysine 299 are cytoplasmic.

This sequence belongs to the G-protein coupled receptor T2R family.

The protein localises to the membrane. Its subcellular location is the cell projection. The protein resides in the cilium membrane. Functionally, gustducin-coupled receptor implicated in the perception of bitter compounds in the oral cavity and the gastrointestinal tract. Signals through PLCB2 and the calcium-regulated cation channel TRPM5. In airway epithelial cells, binding of denatonium increases the intracellular calcium ion concentration and stimulates ciliary beat frequency. This is Taste receptor type 2 member 4 (TAS2R4) from Papio hamadryas (Hamadryas baboon).